Here is a 940-residue protein sequence, read N- to C-terminus: Isoleucine--tRNA ligase (940 aa).

Residues 58–68 (PYANGDIHIGH) carry the 'HIGH' region motif. Residue E564 coordinates L-isoleucyl-5'-AMP. Positions 605–609 (KMSKS) match the 'KMSKS' region motif. K608 provides a ligand contact to ATP. Zn(2+) contacts are provided by C903, C906, C923, and C926.

It belongs to the class-I aminoacyl-tRNA synthetase family. IleS type 1 subfamily. As to quaternary structure, monomer. Zn(2+) is required as a cofactor.

The protein localises to the cytoplasm. It carries out the reaction tRNA(Ile) + L-isoleucine + ATP = L-isoleucyl-tRNA(Ile) + AMP + diphosphate. Functionally, catalyzes the attachment of isoleucine to tRNA(Ile). As IleRS can inadvertently accommodate and process structurally similar amino acids such as valine, to avoid such errors it has two additional distinct tRNA(Ile)-dependent editing activities. One activity is designated as 'pretransfer' editing and involves the hydrolysis of activated Val-AMP. The other activity is designated 'posttransfer' editing and involves deacylation of mischarged Val-tRNA(Ile). This chain is Isoleucine--tRNA ligase, found in Shewanella piezotolerans (strain WP3 / JCM 13877).